Consider the following 309-residue polypeptide: Probable L,D-transpeptidase ErfK/SrfK (309 aa).

An N-terminal signal peptide occupies residues 1–21 (MRRITPFFPFFVLLVSHFSLA). One can recognise a L,D-TPase catalytic domain in the interval 96 to 231 (EGIVVNVAEM…VPVGTRVQII (136 aa)). Catalysis depends on H191, which acts as the Proton donor/acceptor. The active-site Nucleophile is the C207.

This sequence belongs to the YkuD family.

It is found in the periplasm. It functions in the pathway cell wall biogenesis; peptidoglycan biosynthesis. This chain is Probable L,D-transpeptidase ErfK/SrfK (erfK), found in Salmonella typhimurium (strain LT2 / SGSC1412 / ATCC 700720).